Reading from the N-terminus, the 386-residue chain is Oxysterol-binding protein-related protein 4A (386 aa).

It belongs to the OSBP family. Expressed in roots, stems and flowers.

In terms of biological role, may be involved in the transport of sterols. The chain is Oxysterol-binding protein-related protein 4A (ORP4A) from Arabidopsis thaliana (Mouse-ear cress).